The following is a 483-amino-acid chain: MLLKKRSPTSILGTLALTGIVISYMIGGGIFSLPQNMAASASAGAVMLAWMLSGIGIFFIANTFKTLSIIRPDLKAGIYTYSREGFGPYVGFTIAWGYWLCQIFGNVGYAVITMDALNYFFPPYFAGGNTIPAILLGSLLIWIFNYIVLRGIRQASFVNIIGVVCTLIPLLLFILITARFFKFSIFKTDFWGTAPQHTLGSIGSQLKSTMLVTLWAFIGIEGAVVISGRAANPSSVGKATILGFSGCLLIYVLLSLLPFGSLFQYQLAKIADPSTAGVLNILVGKWGEVLMNTGLLIAVLTSWLSWTILASEIPYAAAKNGTFPECFAIENSKHAPSFSLFMTSGLMQITMLLVYFSSNAWNTMLEITGVMVLPAYLTSSLFLVKFSLSKKYPKQAAIKARIAMITGLLGSLYSLWLIYAGGLQHLFMVAILLALGIPFYVDSGIRHKQEKTFLNRKEILKMTIMALAALLAIFLFSANKIHL.

Transmembrane regions (helical) follow at residues 11-33 (ILGT…IFSL), 48-70 (LAWM…LSII), 90-112 (VGFT…YAVI), 127-149 (GGNT…YIVL), 156-178 (SFVN…LITA), 209-228 (TMLV…VISG), 241-263 (ILGF…GSLF), 293-315 (TGLL…EIPY), 335-357 (APSF…VYFS), 367-389 (ITGV…FSLS), 415-435 (LWLI…LLAL), and 458-477 (EILK…FLFS).

This sequence belongs to the amino acid-polyamine-organocation (APC) superfamily. Basic amino acid/polyamine antiporter (APA) (TC 2.A.3.2) family.

The protein localises to the cell inner membrane. Functionally, catalyzes the exchange of L-arginine for agmatine. The arginine uptake by the bacterium in the macrophage may be a virulence factor against the host innate immune response. The protein is Arginine/agmatine antiporter (aaxC) of Chlamydia trachomatis serovar L2 (strain ATCC VR-902B / DSM 19102 / 434/Bu).